A 274-amino-acid chain; its full sequence is Ribosome biogenesis protein UTP30 (274 aa).

Belongs to the universal ribosomal protein uL1 family. Highly divergent. Component of the 90S pre-ribosomes. Interacts with FAF1.

The protein localises to the nucleus. Its subcellular location is the nucleolus. Involved in rRNA-processing and ribosome biosynthesis. The sequence is that of Ribosome biogenesis protein UTP30 (UTP30) from Saccharomyces cerevisiae (strain ATCC 204508 / S288c) (Baker's yeast).